Here is a 401-residue protein sequence, read N- to C-terminus: NADH-quinone oxidoreductase subunit D (401 aa).

The protein belongs to the complex I 49 kDa subunit family. In terms of assembly, NDH-1 is composed of 14 different subunits. Subunits NuoB, C, D, E, F, and G constitute the peripheral sector of the complex.

The protein localises to the cell inner membrane. It carries out the reaction a quinone + NADH + 5 H(+)(in) = a quinol + NAD(+) + 4 H(+)(out). In terms of biological role, NDH-1 shuttles electrons from NADH, via FMN and iron-sulfur (Fe-S) centers, to quinones in the respiratory chain. The immediate electron acceptor for the enzyme in this species is believed to be ubiquinone. Couples the redox reaction to proton translocation (for every two electrons transferred, four hydrogen ions are translocated across the cytoplasmic membrane), and thus conserves the redox energy in a proton gradient. In Rhodopseudomonas palustris (strain HaA2), this protein is NADH-quinone oxidoreductase subunit D.